A 20-amino-acid chain; its full sequence is Alkaline phosphatase (20 aa).

As to expression, expressed by the venom gland.

Its subcellular location is the secreted. It carries out the reaction a phosphate monoester + H2O = an alcohol + phosphate. Its function is as follows. Has hemorrhagic activity. This chain is Alkaline phosphatase, found in Deinagkistrodon acutus (Hundred-pace snake).